The primary structure comprises 395 residues: Cuticlin-5 (395 aa).

A signal peptide spans 1 to 18; that stretch reads MNFILAVFAIILLQAVRG. Over 19 to 358 the chain is Extracellular; sequence EIDNAIVGDP…ELCMTAIGTT (340 aa). Positions 46 to 291 constitute a ZP domain; the sequence is SCVGNFIIKV…DYCDVPSCPD (246 aa). 2 N-linked (GlcNAc...) asparagine glycosylation sites follow: N90 and N307. Residues 359–379 form a helical membrane-spanning segment; sequence LLVFLNAFLFIISLVSIVHVC. Residues 380–395 are Cytoplasmic-facing; the sequence is CFRTSPKLEKTKSTML.

The protein resides in the cell membrane. In terms of biological role, plays a role in alae formation in L1 and dauer stage larvae. In Caenorhabditis elegans, this protein is Cuticlin-5.